We begin with the raw amino-acid sequence, 358 residues long: tRNA-specific 2-thiouridylase MnmA (358 aa).

Residues 8-15 (AMSGGVDS) and M35 contribute to the ATP site. The interval 95–97 (NPD) is interaction with target base in tRNA. Residue C100 is the Nucleophile of the active site. A disulfide bridge links C100 with C194. G124 contacts ATP. An interaction with tRNA region spans residues 144-146 (KDQ). C194 serves as the catalytic Cysteine persulfide intermediate. The segment at 301–302 (RY) is interaction with tRNA.

Belongs to the MnmA/TRMU family.

It localises to the cytoplasm. It carries out the reaction S-sulfanyl-L-cysteinyl-[protein] + uridine(34) in tRNA + AH2 + ATP = 2-thiouridine(34) in tRNA + L-cysteinyl-[protein] + A + AMP + diphosphate + H(+). Its function is as follows. Catalyzes the 2-thiolation of uridine at the wobble position (U34) of tRNA, leading to the formation of s(2)U34. The chain is tRNA-specific 2-thiouridylase MnmA from Chlamydia trachomatis serovar L2 (strain ATCC VR-902B / DSM 19102 / 434/Bu).